The following is a 240-amino-acid chain: Ribonuclease HII (240 aa).

The region spanning 27-226 (GPVAGVDEAG…GETRSLRLED (200 aa)) is the RNase H type-2 domain. Residues aspartate 33, glutamate 34, and aspartate 127 each contribute to the a divalent metal cation site.

This sequence belongs to the RNase HII family. It depends on Mn(2+) as a cofactor. Requires Mg(2+) as cofactor.

It is found in the cytoplasm. The catalysed reaction is Endonucleolytic cleavage to 5'-phosphomonoester.. In terms of biological role, endonuclease that specifically degrades the RNA of RNA-DNA hybrids. This chain is Ribonuclease HII, found in Parafrankia sp. (strain EAN1pec).